The primary structure comprises 344 residues: Phenylalanine--tRNA ligase alpha subunit (344 aa).

Residue Glu259 coordinates Mg(2+).

Belongs to the class-II aminoacyl-tRNA synthetase family. Phe-tRNA synthetase alpha subunit type 1 subfamily. As to quaternary structure, tetramer of two alpha and two beta subunits. Mg(2+) serves as cofactor.

It is found in the cytoplasm. The catalysed reaction is tRNA(Phe) + L-phenylalanine + ATP = L-phenylalanyl-tRNA(Phe) + AMP + diphosphate + H(+). This chain is Phenylalanine--tRNA ligase alpha subunit, found in Nitrosospira multiformis (strain ATCC 25196 / NCIMB 11849 / C 71).